Consider the following 314-residue polypeptide: tRNA dimethylallyltransferase 2 (314 aa).

ATP is bound at residue 8–15 (GPTGTGKS). Position 10–15 (10–15 (TGTGKS)) interacts with substrate.

It belongs to the IPP transferase family. As to quaternary structure, monomer. Requires Mg(2+) as cofactor.

It catalyses the reaction adenosine(37) in tRNA + dimethylallyl diphosphate = N(6)-dimethylallyladenosine(37) in tRNA + diphosphate. Its function is as follows. Catalyzes the transfer of a dimethylallyl group onto the adenine at position 37 in tRNAs that read codons beginning with uridine, leading to the formation of N6-(dimethylallyl)adenosine (i(6)A). The protein is tRNA dimethylallyltransferase 2 of Mycobacterium ulcerans (strain Agy99).